A 314-amino-acid chain; its full sequence is NGFGRIGRNFLRCLETRQNSLLEVIAINDSGGVKQASHLLKYDSTLGKFDADVKIVDDGHISVNGKSIRVVSSRDPTKLPWGEMEIDLVIEGTGVFIDTPGASKHIEAGAKKVLITAPAKGSDIPTYVVGVNAHDYKHSDAIISNASCTTNCLAPFVKVLDEKFGIVKGTMTNTHSYTGDQRLLDASHRDLRRARAAALNIVPTTTGAAKAVALVLPKLKGKLNGIALRVPTPNVSVVDLVVQVEKKTFAEEINNAFKEAAAGSLNGVLAVSDEPLVSVDFRCTDVSSTIDSSLTMVMGADMVKVVAWYDNEWG.

Residues 5–6 (RI), D29, and R74 contribute to the NADP(+) site. The cysteines at positions 13 and 283 are disulfide-linked. Residues 147–149 (SCT), T178, R193, 206–207 (TG), and R229 contribute to the D-glyceraldehyde 3-phosphate site. C148 serves as the catalytic Nucleophile. N311 serves as a coordination point for NADP(+).

The protein belongs to the glyceraldehyde-3-phosphate dehydrogenase family. Homotetramer.

Its subcellular location is the plastid. The protein resides in the chloroplast. The catalysed reaction is D-glyceraldehyde 3-phosphate + phosphate + NADP(+) = (2R)-3-phospho-glyceroyl phosphate + NADPH + H(+). The protein operates within carbohydrate biosynthesis; Calvin cycle. In Scenedesmus vacuolatus (Green alga), this protein is Glyceraldehyde-3-phosphate dehydrogenase A, chloroplastic (GapA).